Here is a 694-residue protein sequence, read N- to C-terminus: Elongation factor G (694 aa).

Residues 9 to 288 (DAIRNIGIMA…VIVKWLPSPL (280 aa)) form the tr-type G domain. Residues 18 to 25 (AHIDAGKT), 82 to 86 (DTPGH), and 136 to 139 (NKMD) contribute to the GTP site.

It belongs to the TRAFAC class translation factor GTPase superfamily. Classic translation factor GTPase family. EF-G/EF-2 subfamily.

It localises to the cytoplasm. Catalyzes the GTP-dependent ribosomal translocation step during translation elongation. During this step, the ribosome changes from the pre-translocational (PRE) to the post-translocational (POST) state as the newly formed A-site-bound peptidyl-tRNA and P-site-bound deacylated tRNA move to the P and E sites, respectively. Catalyzes the coordinated movement of the two tRNA molecules, the mRNA and conformational changes in the ribosome. This chain is Elongation factor G, found in Chlamydia trachomatis serovar L2b (strain UCH-1/proctitis).